The primary structure comprises 83 residues: U5-theraphotoxin-Hs1c (83 aa).

Positions 1–21 (MKTSMFLTLTGLVLLFVVCYA) are cleaved as a signal peptide. Residues 22-49 (SESEEKEFPKELLSSIFAADSDFKVEER) constitute a propeptide that is removed on maturation. Intrachain disulfides connect Cys51/Cys63, Cys56/Cys68, and Cys62/Cys75.

Belongs to the neurotoxin 10 (Hwtx-1) family. 51 (Hntx-8) subfamily. Hntx-8 sub-subfamily. In terms of tissue distribution, expressed by the venom gland.

It localises to the secreted. Agglutinates erythrocytes. The chain is U5-theraphotoxin-Hs1c from Cyriopagopus schmidti (Chinese bird spider).